Consider the following 88-residue polypeptide: Small ribosomal subunit protein uS15 (88 aa).

The protein belongs to the universal ribosomal protein uS15 family. As to quaternary structure, part of the 30S ribosomal subunit. Forms a bridge to the 50S subunit in the 70S ribosome, contacting the 23S rRNA.

Functionally, one of the primary rRNA binding proteins, it binds directly to 16S rRNA where it helps nucleate assembly of the platform of the 30S subunit by binding and bridging several RNA helices of the 16S rRNA. Its function is as follows. Forms an intersubunit bridge (bridge B4) with the 23S rRNA of the 50S subunit in the ribosome. The sequence is that of Small ribosomal subunit protein uS15 from Paracidovorax citrulli (strain AAC00-1) (Acidovorax citrulli).